The sequence spans 867 residues: Protein melted homolog (867 aa).

The tract at residues 480–505 (MPSSSRTNVHLSQAASSSRGHSLPQT) is disordered. The 108-residue stretch at 753–860 (EKVLEGQLKE…WLHCLQIAMA (108 aa)) folds into the PH domain.

This sequence belongs to the MELT/VEPH family.

It localises to the cell membrane. The sequence is that of Protein melted homolog from Caenorhabditis briggsae.